The sequence spans 915 residues: Hexokinase HKDC1 (915 aa).

Residues 1–20 (MFAVHLVAFYFTKLKEDQIK) form a mitochondrial-binding peptide (MBP) region. Hexokinase domains follow at residues 16–458 (EDQI…MVTA) and 464–903 (QAQR…LITA). ATP is bound by residues arginine 30 and 84-89 (DLGGSK). Positions 73–207 (DGSENGEFLS…DLDVDILALV (135 aa)) are hexokinase small subdomain 1. Residue 84–91 (DLGGSKFR) participates in D-glucose 6-phosphate binding. Residues serine 155, 172-173 (TK), and 208-209 (ND) contribute to the D-glucose site. Residues 208–447 (NDTVGTMMTC…CDVRFLLSES (240 aa)) are hexokinase large subdomain 1. D-glucose 6-phosphate-binding residues include aspartate 209 and threonine 232. D-glucose is bound by residues asparagine 235, glutamate 260, and 291 to 294 (QLFE). 413–415 (DGT) serves as a coordination point for D-glucose 6-phosphate. Residue 425–426 (KR) participates in ATP binding. D-glucose 6-phosphate contacts are provided by residues serine 449 and 532-536 (DLGGT). The tract at residues 521–652 (DGTEKGKFLA…EFDLDIVAIV (132 aa)) is hexokinase small subdomain 2. Residue 532-537 (DLGGTN) coordinates ATP. Residues 600–601 (SF), 617–618 (TK), and 653–654 (ND) each bind D-glucose. Residues 653–892 (NDTVGTMMTC…CDVTFMLSED (240 aa)) are hexokinase large subdomain 2. Residues aspartate 654 and threonine 677 each contribute to the D-glucose 6-phosphate site. Threonine 677 serves as a coordination point for ATP. D-glucose-binding positions include 679 to 680 (SN), glutamate 705, and glutamate 739. Residues 744–745 (GM), 781–785 (TKFLS), and 860–864 (TLYKL) each bind ATP. D-glucose 6-phosphate contacts are provided by residues 858–860 (DGT) and serine 894.

The protein belongs to the hexokinase family. As to expression, widely expressed. Detected in retina, brain, cerebellum, liver, lung, kidney, spleen, pancreas and intestine.

The protein resides in the cytoplasm. It localises to the mitochondrion membrane. The protein localises to the photoreceptor inner segment. The enzyme catalyses a D-hexose + ATP = a D-hexose 6-phosphate + ADP + H(+). It catalyses the reaction D-glucose + ATP = D-glucose 6-phosphate + ADP + H(+). Its pathway is carbohydrate metabolism; hexose metabolism. It functions in the pathway carbohydrate degradation; glycolysis; D-glyceraldehyde 3-phosphate and glycerone phosphate from D-glucose: step 1/4. Functionally, catalyzes the phosphorylation of hexose to hexose 6-phosphate, although at very low level compared to other hexokinases. Has low glucose phosphorylating activity compared to other hexokinases. Involved in glucose homeostasis and hepatic lipid accumulation. Required to maintain whole-body glucose homeostasis during pregnancy; however additional evidences are required to confirm this role. The chain is Hexokinase HKDC1 from Mus musculus (Mouse).